Here is a 481-residue protein sequence, read N- to C-terminus: Probable cytosol aminopeptidase (481 aa).

Positions 247 and 252 each coordinate Mn(2+). Residue Lys259 is part of the active site. Residues Asp270, Asp329, and Glu331 each coordinate Mn(2+). Residue Arg333 is part of the active site.

Belongs to the peptidase M17 family. Mn(2+) is required as a cofactor.

It is found in the cytoplasm. It catalyses the reaction Release of an N-terminal amino acid, Xaa-|-Yaa-, in which Xaa is preferably Leu, but may be other amino acids including Pro although not Arg or Lys, and Yaa may be Pro. Amino acid amides and methyl esters are also readily hydrolyzed, but rates on arylamides are exceedingly low.. The enzyme catalyses Release of an N-terminal amino acid, preferentially leucine, but not glutamic or aspartic acids.. In terms of biological role, presumably involved in the processing and regular turnover of intracellular proteins. Catalyzes the removal of unsubstituted N-terminal amino acids from various peptides. The chain is Probable cytosol aminopeptidase from Clostridium tetani (strain Massachusetts / E88).